Here is a 670-residue protein sequence, read N- to C-terminus: Nitrate import ATP-binding protein NrtC (670 aa).

Residues 5 to 239 (IEIDHVDRIF…RPRHRLEVVN (235 aa)) form the ABC transporter domain. ATP is bound at residue 42–49 (GHSGCGKS). The segment at 255–278 (NQQKRAKKVGAVSQFAEAMGGNGL) is linker. The nrtA-like stretch occupies residues 279 to 670 (EKINLDLGFI…LIDQIDQVNQ (392 aa)).

It belongs to the ABC transporter superfamily. Nitrate/nitrite/cyanate uptake transporter (NitT) (TC 3.A.1.16) family. In terms of assembly, the complex is composed of two ATP-binding proteins (NrtC and NrtD), two transmembrane proteins (NrtB) and a solute-binding protein (NrtA).

It is found in the cell inner membrane. The catalysed reaction is nitrate(out) + ATP + H2O = nitrate(in) + ADP + phosphate + H(+). Part of the ABC transporter complex NrtABCD involved in nitrate uptake. The complex is probably also involved in nitrite transport. Probably responsible for energy coupling to the transport system. This Synechocystis sp. (strain ATCC 27184 / PCC 6803 / Kazusa) protein is Nitrate import ATP-binding protein NrtC (nrtC).